Consider the following 330-residue polypeptide: N-acetyl-gamma-glutamyl-phosphate reductase (330 aa).

Cys-155 is a catalytic residue.

This sequence belongs to the NAGSA dehydrogenase family. Type 1 subfamily.

The protein resides in the cytoplasm. It carries out the reaction N-acetyl-L-glutamate 5-semialdehyde + phosphate + NADP(+) = N-acetyl-L-glutamyl 5-phosphate + NADPH + H(+). It functions in the pathway amino-acid biosynthesis; L-arginine biosynthesis; N(2)-acetyl-L-ornithine from L-glutamate: step 3/4. Catalyzes the NADPH-dependent reduction of N-acetyl-5-glutamyl phosphate to yield N-acetyl-L-glutamate 5-semialdehyde. The chain is N-acetyl-gamma-glutamyl-phosphate reductase from Shewanella halifaxensis (strain HAW-EB4).